We begin with the raw amino-acid sequence, 504 residues long: ATP synthase subunit beta (504 aa).

181–188 lines the ATP pocket; it reads GGAGVGKT.

Belongs to the ATPase alpha/beta chains family. In terms of assembly, F-type ATPases have 2 components, CF(1) - the catalytic core - and CF(0) - the membrane proton channel. CF(1) has five subunits: alpha(3), beta(3), gamma(1), delta(1), epsilon(1). CF(0) has three main subunits: a(1), b(2) and c(9-12). The alpha and beta chains form an alternating ring which encloses part of the gamma chain. CF(1) is attached to CF(0) by a central stalk formed by the gamma and epsilon chains, while a peripheral stalk is formed by the delta and b chains.

Its subcellular location is the cell inner membrane. The enzyme catalyses ATP + H2O + 4 H(+)(in) = ADP + phosphate + 5 H(+)(out). Its function is as follows. Produces ATP from ADP in the presence of a proton gradient across the membrane. The catalytic sites are hosted primarily by the beta subunits. In Ehrlichia ruminantium (strain Gardel), this protein is ATP synthase subunit beta.